The sequence spans 261 residues: Glutamate 5-kinase (261 aa).

An ATP-binding site is contributed by K7. Substrate is bound by residues S46, D131, and N147. ATP-binding positions include 167 to 168 and 209 to 215; these read SD and TGGIVTK.

It belongs to the glutamate 5-kinase family.

The protein localises to the cytoplasm. It carries out the reaction L-glutamate + ATP = L-glutamyl 5-phosphate + ADP. It functions in the pathway amino-acid biosynthesis; L-proline biosynthesis; L-glutamate 5-semialdehyde from L-glutamate: step 1/2. Functionally, catalyzes the transfer of a phosphate group to glutamate to form L-glutamate 5-phosphate. The polypeptide is Glutamate 5-kinase (Wolinella succinogenes (strain ATCC 29543 / DSM 1740 / CCUG 13145 / JCM 31913 / LMG 7466 / NCTC 11488 / FDC 602W) (Vibrio succinogenes)).